The sequence spans 350 residues: Protein Wnt-8b (350 aa).

Residues 1–21 form the signal peptide; the sequence is MFLMKPVCVLLVTCVLHRSHA. Cysteines 53 and 64 form a disulfide. N-linked (GlcNAc...) asparagine glycosylation occurs at Asn-102. Intrachain disulfides connect Cys-103-Cys-111, Cys-113-Cys-131, Cys-179-Cys-193, Cys-181-Cys-188, Cys-255-Cys-293, Cys-271-Cys-286, Cys-290-Cys-332, Cys-308-Cys-323, Cys-310-Cys-320, and Cys-315-Cys-316. Ser-185 carries O-palmitoleoyl serine lipidation. Asn-258 carries N-linked (GlcNAc...) asparagine glycosylation.

Belongs to the Wnt family. Post-translationally, palmitoleoylation is required for efficient binding to frizzled receptors. Depalmitoleoylation leads to Wnt signaling pathway inhibition. Proteolytic processing by TIKI1 and TIKI2 promotes oxidation and formation of large disulfide-bond oligomers, leading to inactivation of WNT8B.

The protein resides in the secreted. It is found in the extracellular space. The protein localises to the extracellular matrix. Ligand for members of the frizzled family of seven transmembrane receptors. May play an important role in the development and differentiation of certain forebrain structures, notably the hippocampus. This is Protein Wnt-8b (Wnt8b) from Mus musculus (Mouse).